We begin with the raw amino-acid sequence, 1648 residues long: AT-rich interactive domain-containing protein arid-1 (1648 aa).

Disordered stretches follow at residues 150-270 (ISEA…PVIN) and 284-307 (RKLEKQAMKREKQRLKEEEREEKL). 3 stretches are compositionally biased toward acidic residues: residues 166–193 (DDDENDEEDQEDGENEEDADDDDDDTEE), 219–228 (TQSEESSADS), and 251–260 (SDEEDQEDLA). A compositionally biased stretch (polar residues) spans 261–270 (TTDSENPVIN). One can recognise an ARID domain in the interval 655–745 (AETKDLFVAM…FLESYLAINT (91 aa)). Disordered regions lie at residues 763-935 (VLPG…KEDT), 1095-1563 (SEKR…KPHD), and 1628-1648 (KTASSAAAAQASSSTCSTPRP). A compositionally biased stretch (acidic residues) spans 848–860 (SDDVTDVPDDMTD). Composition is skewed to basic and acidic residues over residues 861 to 878 (HEDLLPEAATRKKYERKS) and 925 to 935 (SEGRGPRKEDT). Composition is skewed to acidic residues over residues 1102 to 1112 (DDDESSDSDTD) and 1145 to 1154 (GDEEAEEEVK). Over residues 1165–1185 (QESPPTTSQGTTTPETAATGG) the composition is skewed to low complexity. Over residues 1195-1208 (YPPVPEELVPPPPV) the composition is skewed to pro residues. Over residues 1213–1251 (FPSTDRFSSGGSSNYPTLSRQGSINSMASPMFSPNSDLS) the composition is skewed to polar residues. Residues 1313 to 1326 (RASERSIDSASEHH) are compositionally biased toward basic and acidic residues. The span at 1348 to 1357 (ISTTQPTDTS) shows a compositional bias: polar residues. The span at 1377 to 1392 (ASPTLLTSGPLTLSSS) shows a compositional bias: low complexity. Residues 1393–1404 (APPPPPASPAPP) are compositionally biased toward pro residues. 2 stretches are compositionally biased toward low complexity: residues 1474–1486 (STTTTDTITPKSI) and 1531–1541 (TPTTMTTSTPT). The span at 1542–1551 (RADSFQTQKN) shows a compositional bias: polar residues.

The protein localises to the nucleus. DNA-binding protein which modulates activity of several transcription factors. Plays a role in the modulation of endoplasmic reticulum (ER) homeostasis during chemical and pathogen stress, including exposure to the Gram-negative bacterium P.aeruginosa. The chain is AT-rich interactive domain-containing protein arid-1 from Caenorhabditis elegans.